Reading from the N-terminus, the 504-residue chain is 26S proteasome non-ATPase regulatory subunit 5 (504 aa).

An N-acetylalanine modification is found at alanine 2.

This sequence belongs to the proteasome subunit S5B/HSM3 family. Interacts with PSMC1, PSMC2, PSMD1 and PSMD6. Part of transient complex containing PSMD5, PSMC2, PSMC1 and PSMD2 formed during the assembly of the 26S proteasome.

Its function is as follows. Acts as a chaperone during the assembly of the 26S proteasome, specifically of the base subcomplex of the PA700/19S regulatory complex (RC). In the initial step of the base subcomplex assembly is part of an intermediate PSMD5:PSMC2:PSMC1:PSMD2 module which probably assembles with a PSMD10:PSMC4:PSMC5:PAAF1 module followed by dissociation of PSMD5. This chain is 26S proteasome non-ATPase regulatory subunit 5 (Psmd5), found in Mus musculus (Mouse).